We begin with the raw amino-acid sequence, 358 residues long: MNFTVGFKPLLGDAHSMDNLEKQLICPICLEMFSKPVVILPCQHNLCRKCANDVFQASNPLWQSRGSTTVSSGGRFRCPSCRHEVVLDRHGVYGLQRNLLVENIIDIYKQESSRPLHSKAEQHLMCEEHEEEKINIYCLSCEVPTCSLCKVFGAHKDCEVAPLPTIYKRQKSELSDGIAMLVAGNDRVQAVITQMEEVCQTIEDNSRRQKQLLNQRFESLCAVLEERKGELLQALAREQEEKLQRVRGLIRQYGDHLEASSKLVESAIQSMEEPQMALYLQQAKELINKVGAMSKVELAGRPEPGYESMEQFTVRVEHVAEMLRTIDFQPGASGEEEEVAPDGEEGSAGPEEERPDGP.

The RING-type zinc-finger motif lies at 26–82; that stretch reads CPICLEMFSKPVVILPCQHNLCRKCANDVFQASNPLWQSRGSTTVSSGGRFRCPSCR. The B box-type zinc-finger motif lies at 121–163; sequence EQHLMCEEHEEEKINIYCLSCEVPTCSLCKVFGAHKDCEVAPL. Positions 126, 129, 149, and 155 each coordinate Zn(2+). Residues 168-211 are mediates microtubule-binding and homooligomerization; the sequence is KRQKSELSDGIAMLVAGNDRVQAVITQMEEVCQTIEDNSRRQKQ. Residues 220–258 adopt a coiled-coil conformation; the sequence is LCAVLEERKGELLQALAREQEEKLQRVRGLIRQYGDHLE. The COS domain occupies 271–329; sequence MEEPQMALYLQQAKELINKVGAMSKVELAGRPEPGYESMEQFTVRVEHVAEMLRTIDFQ. Residues 326-358 form a disordered region; that stretch reads IDFQPGASGEEEEVAPDGEEGSAGPEEERPDGP. Residues 334–345 show a composition bias toward acidic residues; sequence GEEEEVAPDGEE.

In terms of assembly, homooligomer and heterooligomer. Interacts with tubulin. Interacts with TRIM63 and probably with TRIM55. As to expression, specifically expressed in heart and skeletal muscle.

It localises to the cytoplasm. It is found in the cytoskeleton. Its subcellular location is the myofibril. The protein resides in the sarcomere. The protein localises to the z line. May bind and stabilize microtubules during myotubes formation. In Homo sapiens (Human), this protein is Tripartite motif-containing protein 54 (TRIM54).